Here is a 170-residue protein sequence, read N- to C-terminus: Transcription factor E (170 aa).

The HTH TFE/IIEalpha-type domain maps to 1 to 93 (MKDAYLYVVE…AWYVDDEIIR (93 aa)).

Belongs to the TFE family. Monomer. Interaction with RNA polymerase subunits RpoF and RpoE is necessary for Tfe stimulatory transcription activity. Able to interact with Tbp and RNA polymerase in the absence of DNA promoter. Interacts both with the preinitiation and elongation complexes.

Functionally, transcription factor that plays a role in the activation of archaeal genes transcribed by RNA polymerase. Facilitates transcription initiation by enhancing TATA-box recognition by TATA-box-binding protein (Tbp), and transcription factor B (Tfb) and RNA polymerase recruitment. Not absolutely required for transcription in vitro, but particularly important in cases where Tbp or Tfb function is not optimal. It dynamically alters the nucleic acid-binding properties of RNA polymerases by stabilizing the initiation complex and destabilizing elongation complexes. Seems to translocate with the RNA polymerase following initiation and acts by binding to the non template strand of the transcription bubble in elongation complexes. The chain is Transcription factor E from Pyrobaculum arsenaticum (strain DSM 13514 / JCM 11321 / PZ6).